A 389-amino-acid chain; its full sequence is uncharacterized protein (389 aa).

WD repeat units follow at residues 11–53, 146–186, and 289–330; these read SFGS…QKIK, SHHD…EEDA, and AHGD…LDIP. Ser-351 bears the Phosphoserine mark. The segment at 361-389 is disordered; the sequence is QKESVSTRPRKEKHKKAKKHSMKSRFKPY. Over residues 368–389 the composition is skewed to basic residues; it reads RPRKEKHKKAKKHSMKSRFKPY.

This is an uncharacterized protein from Saccharomyces cerevisiae (strain ATCC 204508 / S288c) (Baker's yeast).